Here is a 271-residue protein sequence, read N- to C-terminus: ATP synthase subunit a (271 aa).

The next 5 helical transmembrane spans lie at 47-67 (WENI…AYLG), 107-127 (FLGT…VPLM), 133-153 (SLNI…FLNI), 209-229 (ILIG…ETFV), and 235-255 (LPFM…FTLL).

This sequence belongs to the ATPase A chain family. In terms of assembly, F-type ATPases have 2 components, CF(1) - the catalytic core - and CF(0) - the membrane proton channel. CF(1) has five subunits: alpha(3), beta(3), gamma(1), delta(1), epsilon(1). CF(0) has three main subunits: a(1), b(2) and c(9-12). The alpha and beta chains form an alternating ring which encloses part of the gamma chain. CF(1) is attached to CF(0) by a central stalk formed by the gamma and epsilon chains, while a peripheral stalk is formed by the delta and b chains.

The protein resides in the cell inner membrane. Its function is as follows. Key component of the proton channel; it plays a direct role in the translocation of protons across the membrane. The protein is ATP synthase subunit a of Protochlamydia amoebophila (strain UWE25).